The sequence spans 247 residues: Carboxy-S-adenosyl-L-methionine synthase (247 aa).

S-adenosyl-L-methionine contacts are provided by residues Tyr40, 65–67 (GCS), 90–91 (DN), 122–123 (DI), Asn137, and Arg204.

It belongs to the class I-like SAM-binding methyltransferase superfamily. Cx-SAM synthase family. As to quaternary structure, homodimer.

The catalysed reaction is prephenate + S-adenosyl-L-methionine = carboxy-S-adenosyl-L-methionine + 3-phenylpyruvate + H2O. Its function is as follows. Catalyzes the conversion of S-adenosyl-L-methionine (SAM) to carboxy-S-adenosyl-L-methionine (Cx-SAM). The sequence is that of Carboxy-S-adenosyl-L-methionine synthase from Stutzerimonas stutzeri (strain A1501) (Pseudomonas stutzeri).